A 117-amino-acid chain; its full sequence is Large ribosomal subunit protein bL19 (117 aa).

Belongs to the bacterial ribosomal protein bL19 family.

In terms of biological role, this protein is located at the 30S-50S ribosomal subunit interface and may play a role in the structure and function of the aminoacyl-tRNA binding site. This Phocaeicola vulgatus (strain ATCC 8482 / DSM 1447 / JCM 5826 / CCUG 4940 / NBRC 14291 / NCTC 11154) (Bacteroides vulgatus) protein is Large ribosomal subunit protein bL19.